Reading from the N-terminus, the 65-residue chain is Large ribosomal subunit protein bL31 (65 aa).

Residues C16, C18, C36, and C39 each coordinate Zn(2+).

This sequence belongs to the bacterial ribosomal protein bL31 family. Type A subfamily. Part of the 50S ribosomal subunit. It depends on Zn(2+) as a cofactor.

In terms of biological role, binds the 23S rRNA. In Alkaliphilus metalliredigens (strain QYMF), this protein is Large ribosomal subunit protein bL31.